Reading from the N-terminus, the 110-residue chain is Large ribosomal subunit protein uL22 (110 aa).

Belongs to the universal ribosomal protein uL22 family. Part of the 50S ribosomal subunit.

Functionally, this protein binds specifically to 23S rRNA; its binding is stimulated by other ribosomal proteins, e.g. L4, L17, and L20. It is important during the early stages of 50S assembly. It makes multiple contacts with different domains of the 23S rRNA in the assembled 50S subunit and ribosome. In terms of biological role, the globular domain of the protein is located near the polypeptide exit tunnel on the outside of the subunit, while an extended beta-hairpin is found that lines the wall of the exit tunnel in the center of the 70S ribosome. The protein is Large ribosomal subunit protein uL22 of Shewanella frigidimarina (strain NCIMB 400).